A 484-amino-acid chain; its full sequence is tRNA sulfurtransferase (484 aa).

Positions Q63–R167 constitute a THUMP domain. ATP-binding positions include L185–I186, K267, G289, and Q298. C346 and C458 form a disulfide bridge. The region spanning I406–P484 is the Rhodanese domain. The Cysteine persulfide intermediate role is filled by C458.

This sequence belongs to the ThiI family.

The protein localises to the cytoplasm. It catalyses the reaction [ThiI sulfur-carrier protein]-S-sulfanyl-L-cysteine + a uridine in tRNA + 2 reduced [2Fe-2S]-[ferredoxin] + ATP + H(+) = [ThiI sulfur-carrier protein]-L-cysteine + a 4-thiouridine in tRNA + 2 oxidized [2Fe-2S]-[ferredoxin] + AMP + diphosphate. It carries out the reaction [ThiS sulfur-carrier protein]-C-terminal Gly-Gly-AMP + S-sulfanyl-L-cysteinyl-[cysteine desulfurase] + AH2 = [ThiS sulfur-carrier protein]-C-terminal-Gly-aminoethanethioate + L-cysteinyl-[cysteine desulfurase] + A + AMP + 2 H(+). Its pathway is cofactor biosynthesis; thiamine diphosphate biosynthesis. Catalyzes the ATP-dependent transfer of a sulfur to tRNA to produce 4-thiouridine in position 8 of tRNAs, which functions as a near-UV photosensor. Also catalyzes the transfer of sulfur to the sulfur carrier protein ThiS, forming ThiS-thiocarboxylate. This is a step in the synthesis of thiazole, in the thiamine biosynthesis pathway. The sulfur is donated as persulfide by IscS. The chain is tRNA sulfurtransferase from Shewanella sp. (strain MR-4).